Consider the following 475-residue polypeptide: Cytochrome P450 monooxygenase opdE (475 aa).

The chain crosses the membrane as a helical span at residues 10 to 32; sequence VQNIPVLLLSCGFLAILFRSLVL. Heme is bound at residue Cys-457.

This sequence belongs to the cytochrome P450 family. Heme serves as cofactor.

The protein localises to the membrane. It functions in the pathway secondary metabolite biosynthesis. In terms of biological role, cytochrome P450 monooxygenase; part of the gene cluster that mediates the biosynthesis of oxopyrrolidines, polyketide-amino acid hybrid compounds with feature structures of tetramic acid. Does not seem to play a role in oxopyrrolidines A and B biosynthesis. May be involved in further modifications of these oxopyrrolidines. The polypeptide is Cytochrome P450 monooxygenase opdE (Penicillium oxalicum (strain 114-2 / CGMCC 5302) (Penicillium decumbens)).